A 179-amino-acid chain; its full sequence is Large ribosomal subunit protein uL5 (179 aa).

The protein belongs to the universal ribosomal protein uL5 family. As to quaternary structure, part of the 50S ribosomal subunit; part of the 5S rRNA/L5/L18/L25 subcomplex. Contacts the 5S rRNA and the P site tRNA. Forms a bridge to the 30S subunit in the 70S ribosome.

Its function is as follows. This is one of the proteins that bind and probably mediate the attachment of the 5S RNA into the large ribosomal subunit, where it forms part of the central protuberance. In the 70S ribosome it contacts protein S13 of the 30S subunit (bridge B1b), connecting the 2 subunits; this bridge is implicated in subunit movement. Contacts the P site tRNA; the 5S rRNA and some of its associated proteins might help stabilize positioning of ribosome-bound tRNAs. The polypeptide is Large ribosomal subunit protein uL5 (Salmonella agona (strain SL483)).